The following is a 239-amino-acid chain: Phosphoribosylaminoimidazole-succinocarboxamide synthase (239 aa).

Belongs to the SAICAR synthetase family.

It carries out the reaction 5-amino-1-(5-phospho-D-ribosyl)imidazole-4-carboxylate + L-aspartate + ATP = (2S)-2-[5-amino-1-(5-phospho-beta-D-ribosyl)imidazole-4-carboxamido]succinate + ADP + phosphate + 2 H(+). It functions in the pathway purine metabolism; IMP biosynthesis via de novo pathway; 5-amino-1-(5-phospho-D-ribosyl)imidazole-4-carboxamide from 5-amino-1-(5-phospho-D-ribosyl)imidazole-4-carboxylate: step 1/2. The polypeptide is Phosphoribosylaminoimidazole-succinocarboxamide synthase (Bacillus cereus (strain B4264)).